The chain runs to 218 residues: Methylthioribulose-1-phosphate dehydratase (218 aa).

H107 and H109 together coordinate Zn(2+).

The protein belongs to the aldolase class II family. MtnB subfamily. Zn(2+) serves as cofactor.

The enzyme catalyses 5-(methylsulfanyl)-D-ribulose 1-phosphate = 5-methylsulfanyl-2,3-dioxopentyl phosphate + H2O. It functions in the pathway amino-acid biosynthesis; L-methionine biosynthesis via salvage pathway; L-methionine from S-methyl-5-thio-alpha-D-ribose 1-phosphate: step 2/6. Functionally, catalyzes the dehydration of methylthioribulose-1-phosphate (MTRu-1-P) into 2,3-diketo-5-methylthiopentyl-1-phosphate (DK-MTP-1-P). The sequence is that of Methylthioribulose-1-phosphate dehydratase from Xylella fastidiosa (strain Temecula1 / ATCC 700964).